An 88-amino-acid polypeptide reads, in one-letter code: Small ribosomal subunit protein uS15 (88 aa).

It belongs to the universal ribosomal protein uS15 family. In terms of assembly, part of the 30S ribosomal subunit. Forms a bridge to the 50S subunit in the 70S ribosome, contacting the 23S rRNA.

One of the primary rRNA binding proteins, it binds directly to 16S rRNA where it helps nucleate assembly of the platform of the 30S subunit by binding and bridging several RNA helices of the 16S rRNA. Its function is as follows. Forms an intersubunit bridge (bridge B4) with the 23S rRNA of the 50S subunit in the ribosome. The protein is Small ribosomal subunit protein uS15 of Thermoanaerobacter pseudethanolicus (strain ATCC 33223 / 39E) (Clostridium thermohydrosulfuricum).